The primary structure comprises 296 residues: Probable endonuclease 4 (296 aa).

Zn(2+)-binding residues include His-68, His-109, Glu-144, Asp-178, His-181, His-213, Asp-226, His-228, and Glu-258.

It belongs to the AP endonuclease 2 family. Requires Zn(2+) as cofactor.

The enzyme catalyses Endonucleolytic cleavage to 5'-phosphooligonucleotide end-products.. Its function is as follows. Endonuclease IV plays a role in DNA repair. It cleaves phosphodiester bonds at apurinic or apyrimidinic (AP) sites, generating a 3'-hydroxyl group and a 5'-terminal sugar phosphate. The protein is Probable endonuclease 4 of Staphylococcus carnosus (strain TM300).